The primary structure comprises 396 residues: Tryptophan synthase beta chain (396 aa).

Lys-86 carries the N6-(pyridoxal phosphate)lysine modification.

Belongs to the TrpB family. In terms of assembly, tetramer of two alpha and two beta chains. Pyridoxal 5'-phosphate is required as a cofactor.

It catalyses the reaction (1S,2R)-1-C-(indol-3-yl)glycerol 3-phosphate + L-serine = D-glyceraldehyde 3-phosphate + L-tryptophan + H2O. Its pathway is amino-acid biosynthesis; L-tryptophan biosynthesis; L-tryptophan from chorismate: step 5/5. Its function is as follows. The beta subunit is responsible for the synthesis of L-tryptophan from indole and L-serine. This chain is Tryptophan synthase beta chain, found in Aliivibrio fischeri (strain MJ11) (Vibrio fischeri).